Here is a 335-residue protein sequence, read N- to C-terminus: Protein-arginine kinase (335 aa).

The region spanning 21 to 244 is the Phosphagen kinase C-terminal domain; that stretch reads IVMSSRIRLA…NQIIHEEKQI (224 aa). ATP is bound by residues 24 to 28, histidine 82, arginine 115, 166 to 170, and 197 to 202; these read SSRIR, RASVM, and RGIYGE.

The protein belongs to the ATP:guanido phosphotransferase family.

The enzyme catalyses L-arginyl-[protein] + ATP = N(omega)-phospho-L-arginyl-[protein] + ADP + H(+). Catalyzes the specific phosphorylation of arginine residues in proteins. This chain is Protein-arginine kinase, found in Staphylococcus aureus (strain USA300).